The following is a 516-amino-acid chain: Cytochrome P450 6d1 (516 aa).

Heme is bound at residue C461.

This sequence belongs to the cytochrome P450 family. Requires heme as cofactor.

The protein resides in the endoplasmic reticulum membrane. It localises to the microsome membrane. In terms of biological role, metabolizes pyrethroid insecticides and other xenobiotics. This is Cytochrome P450 6d1 (CYP6D1) from Musca domestica (House fly).